Reading from the N-terminus, the 166-residue chain is Phospholipase A2 inhibitor A1 (166 aa).

The signal sequence occupies residues 1–19 (MRLILLSGLLLLGIFLANG). One can recognise a C-type lectin domain in the interval 46–161 (LKGSFLIVHK…CDDNLLVVCE (116 aa)). 2 cysteine pairs are disulfide-bonded: Cys83–Cys160 and Cys138–Cys152. N-linked (GlcNAc...) asparagine glycosylation occurs at Asn122.

Belongs to the alpha-type phospholipase A2 inhibitor family. In terms of assembly, homotrimer; non-covalently linked. As to expression, expressed by the liver.

The protein resides in the secreted. In terms of biological role, this phospholipase A2 inhibitor binds directly phospholipase A2 in the presence or absence of calcium. This is Phospholipase A2 inhibitor A1 from Bothrops neuwiedi (Neuwied's lancehead).